Reading from the N-terminus, the 207-residue chain is Holliday junction branch migration complex subunit RuvA (207 aa).

Positions 1–63 (MIGMLKGRVE…QDAITLFGFL (63 aa)) are domain I. Positions 64–142 (DARSKRMFLQ…VDKIETGEPT (79 aa)) are domain II. The segment at 143–153 (STQRIPTDKGV) is flexible linker. The segment at 153-207 (VEQVVEGLMSLGWKQADAQQAVDSVISSSGIALPLEEGNVPTVLRLALTSLDRGR) is domain III.

Belongs to the RuvA family. In terms of assembly, homotetramer. Forms an RuvA(8)-RuvB(12)-Holliday junction (HJ) complex. HJ DNA is sandwiched between 2 RuvA tetramers; dsDNA enters through RuvA and exits via RuvB. An RuvB hexamer assembles on each DNA strand where it exits the tetramer. Each RuvB hexamer is contacted by two RuvA subunits (via domain III) on 2 adjacent RuvB subunits; this complex drives branch migration. In the full resolvosome a probable DNA-RuvA(4)-RuvB(12)-RuvC(2) complex forms which resolves the HJ.

Its subcellular location is the cytoplasm. In terms of biological role, the RuvA-RuvB-RuvC complex processes Holliday junction (HJ) DNA during genetic recombination and DNA repair, while the RuvA-RuvB complex plays an important role in the rescue of blocked DNA replication forks via replication fork reversal (RFR). RuvA specifically binds to HJ cruciform DNA, conferring on it an open structure. The RuvB hexamer acts as an ATP-dependent pump, pulling dsDNA into and through the RuvAB complex. HJ branch migration allows RuvC to scan DNA until it finds its consensus sequence, where it cleaves and resolves the cruciform DNA. This is Holliday junction branch migration complex subunit RuvA from Bifidobacterium animalis subsp. lactis (strain AD011).